The sequence spans 486 residues: L-arabinose isomerase (486 aa).

Positions 299, 324, 341, and 440 each coordinate Mn(2+).

The protein belongs to the arabinose isomerase family. It depends on Mn(2+) as a cofactor.

The enzyme catalyses beta-L-arabinopyranose = L-ribulose. Its pathway is carbohydrate degradation; L-arabinose degradation via L-ribulose; D-xylulose 5-phosphate from L-arabinose (bacterial route): step 1/3. Catalyzes the conversion of L-arabinose to L-ribulose. This chain is L-arabinose isomerase, found in Shouchella clausii (strain KSM-K16) (Alkalihalobacillus clausii).